The chain runs to 217 residues: NADPH-dependent 3-demethoxyubiquinone 3-hydroxylase, mitochondrial (217 aa).

Residues 1–35 (MSCAGAAAAPRLWRLRPGARRSLSAYGRRTSVRFR) constitute a mitochondrion transit peptide. The segment at 11-29 (RLWRLRPGARRSLSAYGRR) is required for nuclear localization. A run of 2 repeats spans residues 48 to 129 (AVDR…TALL) and 130 to 217 (GKEG…SERL). Positions 48 to 217 (AVDRIIRVDH…RVAIYLSERL (170 aa)) are 2 X approximate tandem repeats. Arg-51 provides a ligand contact to NADH. Fe cation-binding residues include Glu-60, Glu-90, His-93, Glu-142, Glu-178, and His-181. NADH is bound by residues Tyr-212 and Arg-216.

The protein belongs to the COQ7 family. As to quaternary structure, component of a multi-subunit COQ enzyme complex. Interacts with COQ8B and COQ6. Interacts with COQ9. Fe cation is required as a cofactor. Expressed dominantly in heart and skeletal muscle.

Its subcellular location is the mitochondrion inner membrane. It is found in the mitochondrion. It localises to the nucleus. The protein localises to the chromosome. The enzyme catalyses a 5-methoxy-2-methyl-3-(all-trans-polyprenyl)benzoquinone + NADH + O2 = a 3-demethylubiquinone + NAD(+) + H2O. Its pathway is cofactor biosynthesis; ubiquinone biosynthesis. Functionally, catalyzes the hydroxylation of the 5-methoxy-2-methyl-3-(all-trans-polyprenyl)benzoquinone at the C6 position and participates in the biosynthesis of ubiquinone. Catalyzes the reaction through a substrate-mediated reduction pathway, whereby NADH shuttles electrons to 5-methoxy-2-methyl-3-(all-trans-decaprenyl)benzoquinone, which then transfers the electrons to the two Fe(3+) centers. The binding of 5-methoxy-2-methyl-3-(all-trans-polyprenyl)benzoquinone (DMQn) mediates reduction of the diiron center by nicotinamide adenine dinucleotide (NADH) and initiates oxygen activation for subsequent DMQ hydroxylation. The physiological substrates are 5-methoxy-2-methyl-3-(all-trans-nonaprenyl)benzoquinone (DMQ(9)) and 5-methoxy-2-methyl-3-(all-trans-decaprenyl)benzoquinone (DMQ(10)), however in vitro the enzyme does not have any specificity concerning the length of the polyprenyl tail, and accepts tails of various lengths with similar efficiency. Also has a structural role in the COQ enzyme complex, stabilizing other COQ polypeptides. Involved in lifespan determination in a ubiquinone-independent manner. Plays a role in modulating mitochondrial stress responses, acting in the nucleus, perhaps via regulating gene expression, independent of its characterized mitochondrial function in ubiquinone biosynthesis. The sequence is that of NADPH-dependent 3-demethoxyubiquinone 3-hydroxylase, mitochondrial from Homo sapiens (Human).